A 133-amino-acid polypeptide reads, in one-letter code: Fatty acid-binding protein, heart (133 aa).

Residue alanine 2 is modified to N-acetylalanine. At threonine 8 the chain carries Phosphothreonine. The residue at position 20 (tyrosine 20) is a Phosphotyrosine; by Tyr-kinases. Residue serine 23 is modified to Phosphoserine. Phosphothreonine is present on threonine 30. A Phosphoserine modification is found at serine 83. Position 127 to 129 (127 to 129) interacts with (9Z)-octadecenoate; it reads RTY. A hexadecanoate-binding site is contributed by 127-129; that stretch reads RTY. 127–129 contacts octadecanoate; the sequence is RTY.

As to expression, heart, but also skeletal muscle, kidney, brain and mammary gland.

It is found in the cytoplasm. FABPs are thought to play a role in the intracellular transport of long-chain fatty acids and their acyl-CoA esters. The chain is Fatty acid-binding protein, heart (Fabp3) from Rattus norvegicus (Rat).